A 734-amino-acid chain; its full sequence is Photosystem I P700 chlorophyll a apoprotein A2 (734 aa).

Helical transmembrane passes span 46–69 (IFAS…FHVA), 135–158 (LYTG…LHLQ), 175–199 (LNHH…HVAI), 273–291 (IAHH…GHMY), 330–353 (LHFQ…QHIY), 369–395 (AALY…IFFI), 417–439 (AIIS…LYVH), and 517–535 (FLVH…LILV). [4Fe-4S] cluster contacts are provided by C559 and C568. A run of 2 helical transmembrane segments spans residues 575–596 (AFYL…YWHW) and 643–665 (LSVW…MFLI). Positions 654, 662, and 670 each coordinate chlorophyll a. A phylloquinone-binding site is contributed by W671. A helical transmembrane segment spans residues 707–727 (LVGLAHFSVGYIFTYAAFLIA).

It belongs to the PsaA/PsaB family. As to quaternary structure, the PsaA/B heterodimer binds the P700 chlorophyll special pair and subsequent electron acceptors. PSI consists of a core antenna complex that captures photons, and an electron transfer chain that converts photonic excitation into a charge separation. The eukaryotic PSI reaction center is composed of at least 11 subunits. Requires P700 is a chlorophyll a/chlorophyll a' dimer, A0 is one or more chlorophyll a, A1 is one or both phylloquinones and FX is a shared 4Fe-4S iron-sulfur center. as cofactor.

The protein localises to the plastid. The protein resides in the chloroplast thylakoid membrane. The enzyme catalyses reduced [plastocyanin] + hnu + oxidized [2Fe-2S]-[ferredoxin] = oxidized [plastocyanin] + reduced [2Fe-2S]-[ferredoxin]. In terms of biological role, psaA and PsaB bind P700, the primary electron donor of photosystem I (PSI), as well as the electron acceptors A0, A1 and FX. PSI is a plastocyanin-ferredoxin oxidoreductase, converting photonic excitation into a charge separation, which transfers an electron from the donor P700 chlorophyll pair to the spectroscopically characterized acceptors A0, A1, FX, FA and FB in turn. Oxidized P700 is reduced on the lumenal side of the thylakoid membrane by plastocyanin. The polypeptide is Photosystem I P700 chlorophyll a apoprotein A2 (Staurastrum punctulatum (Green alga)).